Reading from the N-terminus, the 195-residue chain is Probable GTP-binding protein EngB (195 aa).

Positions 22–195 constitute an EngB-type G domain; that stretch reads GRPEVALAGR…WAALLPFVAS (174 aa). Residues 30–37, 57–61, 75–78, 142–145, and 174–176 each bind GTP; these read GRSNVGKS, GKTQT, DVPG, TKAD, and FSA. Residues Ser37 and Thr59 each coordinate Mg(2+).

It belongs to the TRAFAC class TrmE-Era-EngA-EngB-Septin-like GTPase superfamily. EngB GTPase family. It depends on Mg(2+) as a cofactor.

In terms of biological role, necessary for normal cell division and for the maintenance of normal septation. In Geobacillus kaustophilus (strain HTA426), this protein is Probable GTP-binding protein EngB.